The primary structure comprises 272 residues: Phosphatidylglycerol--prolipoprotein diacylglyceryl transferase (272 aa).

The next 7 helical transmembrane spans lie at 17–37, 55–75, 90–110, 125–145, 174–194, 202–222, and 230–250; these read LQVH…WGLA, LVFY…VLFY, VWTG…AMLF, FVAP…FIGG, PSQI…LWWF, MAVS…MEFF, and GFIL…MLLI. R138 contacts a 1,2-diacyl-sn-glycero-3-phospho-(1'-sn-glycerol).

Belongs to the Lgt family.

The protein localises to the cell inner membrane. It carries out the reaction L-cysteinyl-[prolipoprotein] + a 1,2-diacyl-sn-glycero-3-phospho-(1'-sn-glycerol) = an S-1,2-diacyl-sn-glyceryl-L-cysteinyl-[prolipoprotein] + sn-glycerol 1-phosphate + H(+). Its pathway is protein modification; lipoprotein biosynthesis (diacylglyceryl transfer). In terms of biological role, catalyzes the transfer of the diacylglyceryl group from phosphatidylglycerol to the sulfhydryl group of the N-terminal cysteine of a prolipoprotein, the first step in the formation of mature lipoproteins. The polypeptide is Phosphatidylglycerol--prolipoprotein diacylglyceryl transferase (Acinetobacter baumannii (strain AB307-0294)).